We begin with the raw amino-acid sequence, 624 residues long: Polygalacturonase 1 beta-like protein 2 (624 aa).

An N-terminal signal peptide occupies residues 1–26 (MNNIEATLFLCFFCIFSSSNVHFAGA). An FXXY 1 repeat occupies 121 to 124 (FAAY). Asn128 carries an N-linked (GlcNAc...) asparagine glycan. FXXY repeat units follow at residues 129–132 (FTNY), 143–146 (FKNY), 157–160 (FRRY), 171–174 (FTNY), 185–188 (FTTY), 199–202 (FTNY), 213–216 (FTSY), 227–230 (FTTY), 241–244 (FTSY), 255–258 (FSGY), and 269–272 (FTKY). Asn145 is a glycosylation site (N-linked (GlcNAc...) asparagine). Residues 199 to 219 (FTNYNTDANEPNGRFTSYSDK) form a disordered region. A glycan (N-linked (GlcNAc...) asparagine) is linked at Asn280. FXXY repeat units follow at residues 283 to 286 (FTSY), 297 to 300 (FKGY), 311 to 314 (FKNY), 325 to 328 (FSSY), and 339 to 342 (FVNY). An N-linked (GlcNAc...) asparagine glycan is attached at Asn352. Residues 353-356 (FTGY) form an FXXY 18 repeat. N-linked (GlcNAc...) asparagine glycosylation is present at Asn364. FXXY repeat units lie at residues 367–370 (FKTY), 376–379 (FKVY), and 386–389 (FARY). Residues Asn392 and Asn463 are each glycosylated (N-linked (GlcNAc...) asparagine). One can recognise a BURP domain in the interval 409–623 (FFREAMLKEG…FENDMTWNII (215 aa)).

Expressed in flowers and stems.

Its subcellular location is the secreted. The protein resides in the extracellular space. The protein localises to the apoplast. It is found in the cell wall. In terms of biological role, involved in cell size determination. In Arabidopsis thaliana (Mouse-ear cress), this protein is Polygalacturonase 1 beta-like protein 2.